An 85-amino-acid chain; its full sequence is U5-theraphotoxin-Hhn1a (85 aa).

Positions 1–21 (MKSQIFFAVAALFLLTVRTYA) are cleaved as a signal peptide. The propeptide occupies 22-49 (SKSKEQDLRDALFSAMFSADNQLNPQER). Disulfide bonds link C51/C65, C58/C70, and C64/C77.

The protein belongs to the neurotoxin 10 (Hwtx-1) family. 18 (Hntx-VII) subfamily. In terms of tissue distribution, expressed by the venom gland.

Its subcellular location is the secreted. Functionally, ion channel impairing toxin that inhibits voltage-gated sodium channels. The recombinantly expressed toxin shows a weak activity against Nav1.7/SCN9A, and shifts the voltage dependence of channel activation to more depolarized potentials. In Cyriopagopus hainanus (Chinese bird spider), this protein is U5-theraphotoxin-Hhn1a.